The chain runs to 202 residues: Large ribosomal subunit protein uL5 (202 aa).

The span at 1-17 (MSAKAATKNATKVAVKA) shows a compositional bias: low complexity. Positions 1–30 (MSAKAATKNATKVAVKAPEATTPVETKKSK) are disordered.

Belongs to the universal ribosomal protein uL5 family. In terms of assembly, component of the large ribosomal subunit.

It is found in the nucleus. The protein resides in the cytoplasm. Functionally, component of the ribosome, a large ribonucleoprotein complex responsible for the synthesis of proteins in the cell. The small ribosomal subunit (SSU) binds messenger RNAs (mRNAs) and translates the encoded message by selecting cognate aminoacyl-transfer RNA (tRNA) molecules. The large subunit (LSU) contains the ribosomal catalytic site termed the peptidyl transferase center (PTC), which catalyzes the formation of peptide bonds, thereby polymerizing the amino acids delivered by tRNAs into a polypeptide chain. The nascent polypeptides leave the ribosome through a tunnel in the LSU and interact with protein factors that function in enzymatic processing, targeting, and the membrane insertion of nascent chains at the exit of the ribosomal tunnel. The sequence is that of Large ribosomal subunit protein uL5 (rpl11) from Dictyostelium discoideum (Social amoeba).